Reading from the N-terminus, the 381-residue chain is 4-hydroxyphenylpyruvate dioxygenase (381 aa).

2 consecutive VOC domains span residues 22 to 156 (GMDA…LVER) and 184 to 338 (AVDH…IFTK). Residues H187, H270, and E349 each contribute to the Fe cation site.

The protein belongs to the 4HPPD family. Homodimer. Fe cation is required as a cofactor.

It carries out the reaction 3-(4-hydroxyphenyl)pyruvate + O2 = homogentisate + CO2. It participates in amino-acid degradation; L-phenylalanine degradation; acetoacetate and fumarate from L-phenylalanine: step 3/6. This Streptomyces coelicolor (strain ATCC BAA-471 / A3(2) / M145) protein is 4-hydroxyphenylpyruvate dioxygenase (hpd).